A 252-amino-acid polypeptide reads, in one-letter code: Adenosylcobinamide-GDP ribazoletransferase (252 aa).

A run of 6 helical transmembrane segments spans residues 29-49 (LYWF…LGYV), 50-70 (GSLS…GIVL), 104-124 (VGSF…VAVV), 129-149 (FGLF…QVLL), 166-186 (FVAG…LALL), and 194-214 (FPTM…VGMV).

It belongs to the CobS family. The cofactor is Mg(2+).

The protein resides in the cell inner membrane. The enzyme catalyses alpha-ribazole + adenosylcob(III)inamide-GDP = adenosylcob(III)alamin + GMP + H(+). It catalyses the reaction alpha-ribazole 5'-phosphate + adenosylcob(III)inamide-GDP = adenosylcob(III)alamin 5'-phosphate + GMP + H(+). The protein operates within cofactor biosynthesis; adenosylcobalamin biosynthesis; adenosylcobalamin from cob(II)yrinate a,c-diamide: step 7/7. Joins adenosylcobinamide-GDP and alpha-ribazole to generate adenosylcobalamin (Ado-cobalamin). Also synthesizes adenosylcobalamin 5'-phosphate from adenosylcobinamide-GDP and alpha-ribazole 5'-phosphate. The protein is Adenosylcobinamide-GDP ribazoletransferase of Chlorobium chlorochromatii (strain CaD3).